Reading from the N-terminus, the 312-residue chain is Beta-ketoacyl-[acyl-carrier-protein] synthase III (312 aa).

Active-site residues include Cys-112 and His-237. Residues 238-242 (QANIR) are ACP-binding. Asn-267 is an active-site residue.

It belongs to the thiolase-like superfamily. FabH family. As to quaternary structure, homodimer.

Its subcellular location is the cytoplasm. It carries out the reaction malonyl-[ACP] + acetyl-CoA + H(+) = 3-oxobutanoyl-[ACP] + CO2 + CoA. Its pathway is lipid metabolism; fatty acid biosynthesis. Functionally, catalyzes the condensation reaction of fatty acid synthesis by the addition to an acyl acceptor of two carbons from malonyl-ACP. Catalyzes the first condensation reaction which initiates fatty acid synthesis and may therefore play a role in governing the total rate of fatty acid production. Possesses both acetoacetyl-ACP synthase and acetyl transacylase activities. Its substrate specificity determines the biosynthesis of branched-chain and/or straight-chain of fatty acids. This chain is Beta-ketoacyl-[acyl-carrier-protein] synthase III, found in Oceanobacillus iheyensis (strain DSM 14371 / CIP 107618 / JCM 11309 / KCTC 3954 / HTE831).